Reading from the N-terminus, the 620-residue chain is Probable potassium transport system protein Kup (620 aa).

Transmembrane regions (helical) follow at residues valine 8–tyrosine 28, valine 50–isoleucine 70, methionine 102–isoleucine 122, proline 136–isoleucine 156, phenylalanine 168–valine 188, leucine 211–tyrosine 231, tryptophan 246–isoleucine 266, methionine 284–isoleucine 304, isoleucine 336–phenylalanine 356, isoleucine 368–leucine 388, methionine 393–alanine 413, and isoleucine 415–valine 435.

It belongs to the HAK/KUP transporter (TC 2.A.72) family.

Its subcellular location is the cell inner membrane. The enzyme catalyses K(+)(in) + H(+)(in) = K(+)(out) + H(+)(out). Transport of potassium into the cell. Likely operates as a K(+):H(+) symporter. The chain is Probable potassium transport system protein Kup from Rhodopseudomonas palustris (strain HaA2).